We begin with the raw amino-acid sequence, 394 residues long: Protein TsgA homolog (394 aa).

The next 12 helical transmembrane spans lie at 11-31 (WISFFSYALTGALVIVTGMVM), 51-71 (FLNAGILISIFLNAWLMEIVP), 78-98 (FGFVLMVAAVAGLMVSHSIAL), 101-121 (VSMFVLGLVSGITMSIGTFLI), 134-154 (LLFTDSFFSMAGMIFPMVAAV), 162-182 (WYWVYACIGLVYVAIFVLTFG), 206-226 (IGVLFLSVAALCYILGQLGFI), 250-270 (FWMSYMFGMWAFSFILRFFDL), 273-293 (ILTVLAGLATVLMYLFINGAP), 297-317 (AWFILTLGFFSSAIYTSIITL), 332-352 (FVLTCGTIGTMLTFVVTGPIV), and 361-381 (LQTANGLYAVVFVMCLILGFV).

It belongs to the major facilitator superfamily. TsgA family.

Its subcellular location is the cell inner membrane. This is Protein TsgA homolog from Enterobacter sp. (strain 638).